The primary structure comprises 450 residues: Tubulin beta-3 chain (450 aa).

Positions 11, 69, 138, 142, 143, 144, 204, and 226 each coordinate GTP. E69 contacts Mg(2+). Residues S420 to Y450 are disordered. Acidic residues predominate over residues T429 to Y450.

The protein belongs to the tubulin family. As to quaternary structure, dimer of alpha and beta chains. A typical microtubule is a hollow water-filled tube with an outer diameter of 25 nm and an inner diameter of 15 nM. Alpha-beta heterodimers associate head-to-tail to form protofilaments running lengthwise along the microtubule wall with the beta-tubulin subunit facing the microtubule plus end conferring a structural polarity. Microtubules usually have 13 protofilaments but different protofilament numbers can be found in some organisms and specialized cells. Requires Mg(2+) as cofactor.

Its subcellular location is the cytoplasm. It is found in the cytoskeleton. Its function is as follows. Tubulin is the major constituent of microtubules, a cylinder consisting of laterally associated linear protofilaments composed of alpha- and beta-tubulin heterodimers. Microtubules grow by the addition of GTP-tubulin dimers to the microtubule end, where a stabilizing cap forms. Below the cap, tubulin dimers are in GDP-bound state, owing to GTPase activity of alpha-tubulin. This Arabidopsis thaliana (Mouse-ear cress) protein is Tubulin beta-3 chain (TUBB3).